The sequence spans 223 residues: MOB-like protein phocein (223 aa).

Residues Cys-92, Cys-97, Cys-110, His-113, Cys-119, His-127, His-169, and His-174 each coordinate Zn(2+).

Belongs to the MOB1/phocein family. In terms of assembly, part of the core of STRIPAK complexes composed of PP2A catalytic and scaffolding subunits, the striatins (PP2A regulatory subunits), the striatin-associated proteins MOB4, STRIP1 and STRIP2, PDCD10 and members of the STE20 kinases, such as STK24 and STK26.

It is found in the cytoplasm. The protein localises to the membrane. Its subcellular location is the golgi apparatus. The protein resides in the golgi stack membrane. Its function is as follows. Part of the striatin-interacting phosphatase and kinase (STRIPAK) complexes. STRIPAK complexes have critical roles in protein (de)phosphorylation and are regulators of multiple signaling pathways including Hippo, MAPK, nuclear receptor and cytoskeleton remodeling. Different types of STRIPAK complexes are involved in a variety of biological processes such as cell growth, differentiation, apoptosis, metabolism and immune regulation. This chain is MOB-like protein phocein (MOB4), found in Gallus gallus (Chicken).